Here is a 134-residue protein sequence, read N- to C-terminus: UPF0412 protein YaaI (134 aa).

The N-terminal stretch at 1 to 23 (MKSVFTISASLAISLMLCCTAQA) is a signal peptide.

The protein belongs to the UPF0412 family.

This chain is UPF0412 protein YaaI, found in Shigella dysenteriae serotype 1 (strain Sd197).